A 251-amino-acid polypeptide reads, in one-letter code: Adapter protein MecA (251 aa).

The protein belongs to the MecA family. In terms of assembly, homodimer.

In terms of biological role, enables the recognition and targeting of unfolded and aggregated proteins to the ClpC protease or to other proteins involved in proteolysis. In Streptococcus agalactiae serotype Ia (strain ATCC 27591 / A909 / CDC SS700), this protein is Adapter protein MecA.